The following is a 296-amino-acid chain: Ribosomal protein L11 methyltransferase (296 aa).

The S-adenosyl-L-methionine site is built by Thr145, Gly166, Asp188, and Asn230.

This sequence belongs to the methyltransferase superfamily. PrmA family.

It is found in the cytoplasm. The enzyme catalyses L-lysyl-[protein] + 3 S-adenosyl-L-methionine = N(6),N(6),N(6)-trimethyl-L-lysyl-[protein] + 3 S-adenosyl-L-homocysteine + 3 H(+). Methylates ribosomal protein L11. The chain is Ribosomal protein L11 methyltransferase from Histophilus somni (strain 129Pt) (Haemophilus somnus).